The chain runs to 150 residues: Large ribosomal subunit protein uL13 (150 aa).

The disordered stretch occupies residues 129–150 (TEHPHAAQKPQPLQLNPSASAQ). Over residues 139–150 (QPLQLNPSASAQ) the composition is skewed to polar residues.

This sequence belongs to the universal ribosomal protein uL13 family. In terms of assembly, part of the 50S ribosomal subunit.

In terms of biological role, this protein is one of the early assembly proteins of the 50S ribosomal subunit, although it is not seen to bind rRNA by itself. It is important during the early stages of 50S assembly. In Synechococcus sp. (strain CC9605), this protein is Large ribosomal subunit protein uL13.